A 290-amino-acid chain; its full sequence is MTMIKLEQIFWHVWINGDLVPYQFARIHVLTHSLHYSGSVFEGERAYNGKVFKLKEHTERLIKSAEALGLKVPYSVDEIIKAHELVIKQNNIKDAYIRPLIWCGDESLNITNPDLSTNLLIAGIPSMPRSFEKGINLHVGRWRKAIPDSTPVQSKSAAQYNMAITSKKEAKALGYDDALLLDYEGYIAECTTTNIFFVKDKTLYTPIADRFLNGITRQTIIEIAKDLGLEVKEERLKLEQIENFTGCFVTGTAIEVQNIDSIDLGNKKITFDDHQIADRLKKEYGRIVRE.

N6-(pyridoxal phosphate)lysine is present on Lys155.

This sequence belongs to the class-IV pyridoxal-phosphate-dependent aminotransferase family. The cofactor is pyridoxal 5'-phosphate.

It carries out the reaction L-leucine + 2-oxoglutarate = 4-methyl-2-oxopentanoate + L-glutamate. The catalysed reaction is L-isoleucine + 2-oxoglutarate = (S)-3-methyl-2-oxopentanoate + L-glutamate. It catalyses the reaction L-valine + 2-oxoglutarate = 3-methyl-2-oxobutanoate + L-glutamate. It participates in amino-acid biosynthesis; L-isoleucine biosynthesis; L-isoleucine from 2-oxobutanoate: step 4/4. The protein operates within amino-acid biosynthesis; L-leucine biosynthesis; L-leucine from 3-methyl-2-oxobutanoate: step 4/4. Its pathway is amino-acid biosynthesis; L-valine biosynthesis; L-valine from pyruvate: step 4/4. In terms of biological role, acts on leucine, isoleucine and valine. This chain is Probable branched-chain-amino-acid aminotransferase (ilvE), found in Rickettsia felis (strain ATCC VR-1525 / URRWXCal2) (Rickettsia azadi).